A 285-amino-acid chain; its full sequence is Probable methyltransferase ltbC (285 aa).

The segment at 1–22 (MASTGQTNNYKQGYSSQTVETQ) is disordered.

Belongs to the class I-like SAM-binding methyltransferase superfamily. In terms of assembly, monomer.

In terms of biological role, probable methyltransferase; part of the gene cluster that mediates the biosynthesis of luteodienoside A, a glycosylated polyketide consisting of an unusual 1-O-beta-D-glucopyranosyl-myo-inositol (glucinol) ester of 3-hydroxy-2,2,4-trimethylocta-4,6-dienoic acid. The HR-PKS ltbA produces the trimethylated polyketide chain from acetyl-CoA, malonyl-CoA and S-adenosylmethionine (SAM), and the ltbA cAT domain then uses glucinol produced by the glycosyltransferase ltbB as an offloading substrate to release luteodienoside A. Since ltbA and ltbB are sufficient for the biosynthesis of luteodienoside A, the functions of the methyltransferase ltbC and the FAD-binding monooxygenase ltbD within the pathway remain obscur. The sequence is that of Probable methyltransferase ltbC from Aspergillus luteorubrus.